Consider the following 471-residue polypeptide: Cytochrome b-c1 complex subunit 1, mitochondrial (471 aa).

This sequence belongs to the peptidase M16 family.

The protein resides in the mitochondrion matrix. The polypeptide is Cytochrome b-c1 complex subunit 1, mitochondrial (ucr-1) (Caenorhabditis elegans).